Reading from the N-terminus, the 739-residue chain is Cellulose synthase catalytic subunit [UDP-forming] (739 aa).

4 helical membrane passes run V36 to A55, L59 to L76, L83 to F101, and M116 to V138. The catalytic subdomain A stretch occupies residues E157 to V250. The active site involves D199. The substrate site is built by D246 and D248. The tract at residues E327 to M387 is catalytic subdomain B. Residue D343 is part of the active site. 4 helical membrane passes run F417 to F436, I440 to T462, P524 to G546, and A551 to A573. One can recognise a PilZ domain in the interval Q580–S677.

It belongs to the glycosyltransferase 2 family. Mg(2+) is required as a cofactor.

It is found in the cell inner membrane. The enzyme catalyses [(1-&gt;4)-beta-D-glucosyl](n) + UDP-alpha-D-glucose = [(1-&gt;4)-beta-D-glucosyl](n+1) + UDP + H(+). Its pathway is glycan metabolism; bacterial cellulose biosynthesis. With respect to regulation, activated by bis-(3'-5') cyclic diguanylic acid (c-di-GMP). In terms of biological role, catalytic subunit of cellulose synthase. It polymerizes uridine 5'-diphosphate glucose to cellulose, which is produced as an extracellular component responsible for the structural integrity and rigidity of self-supporting mats characteristic of the 'wrinkly spreader' phenotype. The sequence is that of Cellulose synthase catalytic subunit [UDP-forming] (bcsA) from Pseudomonas fluorescens (strain SBW25).